Consider the following 477-residue polypeptide: Putative WAS protein family homolog 4 (477 aa).

The WHD1 stretch occupies residues 1–180 (MSGVMCLKAS…EGLGGLPSNI (180 aa)). 2 disordered regions span residues 310 to 420 (QDGV…QGGH) and 434 to 477 (KGIS…DWES). Pro residues predominate over residues 315–327 (TPPPPPPPPPPAP). Positions 362-477 (QGAPREVVDP…QAEDEDDWES (116 aa)) are VCA. The WH2 domain maps to 374–396 (GWATLLESIRQAGGIGKAKLRSM). Residues 395–411 (SMKERKLEKQQQKEQEQ) show a composition bias toward basic and acidic residues. The span at 437-449 (SGKGPGAGDGPGG) shows a compositional bias: gly residues.

It belongs to the WASH1 family. In terms of assembly, interacts (via WHD1 region) with WASHC2C; the interaction is direct.

The protein resides in the early endosome membrane. It localises to the recycling endosome membrane. In terms of biological role, may act as a nucleation-promoting factor at the surface of endosomes, where it recruits and activates the Arp2/3 complex to induce actin polymerization, playing a key role in the fission of tubules that serve as transport intermediates during endosome sorting. The sequence is that of Putative WAS protein family homolog 4 (WASH4P) from Homo sapiens (Human).